Reading from the N-terminus, the 75-residue chain is MPKYYEEKEEDKHPCAGVKEDLKSCLLQTDCVLQEGKSPKECLKEGYCKALQVTFFECKRSILDTRARFRGRKGY.

The CHCH domain maps to 28–66 (QTDCVLQEGKSPKECLKEGYCKALQVTFFECKRSILDTR). The Cx10C motif signature appears at 31–42 (CVLQEGKSPKEC). Disulfide bonds link C31/C58 and C42/C48. A Cx9C motif motif is present at residues 48–58 (CKALQVTFFEC).

This sequence belongs to the PET191 family.

In terms of biological role, involved in an early step of the mitochondrial complex IV assembly process. The polypeptide is Cytochrome c oxidase assembly factor 5 (coa5) (Xenopus tropicalis (Western clawed frog)).